The chain runs to 507 residues: (6-4) photolyase (507 aa).

6,7-dimethyl-8-(1-D-ribityl)lumazine-binding positions include Gly-9–Asp-10, Cys-32–Tyr-40, and Gly-105. FAD is bound by residues His-265 to Ser-269 and Asn-273. Cys-350 lines the [4Fe-4S] cluster pocket. FAD-binding positions include Tyr-363–His-366, Asp-397, and Asn-406. Residues Cys-438, Cys-441, and Cys-454 each contribute to the [4Fe-4S] cluster site.

The protein belongs to the iron-sulfur bacterial cryptochrome/photolyase (FeS-BCP) family. FAD serves as cofactor. The cofactor is 6,7-dimethyl-8-(1-D-ribityl)lumazine. [4Fe-4S] cluster is required as a cofactor.

It carries out the reaction (6-4) photoproduct (in DNA) = 2 pyrimidine residues (in DNA).. In terms of biological role, photolyase involved in the repair of UV-induced (6-4) lesions in DNA. Catalyzes the photoreactivation of (6-4) pyrimidine-pyrimidone photoproducts by using blue-light energy. Can repair (6-4) photoproducts in ssDNA as well as in dsDNA. This is (6-4) photolyase from Agrobacterium fabrum (strain C58 / ATCC 33970) (Agrobacterium tumefaciens (strain C58)).